An 82-amino-acid chain; its full sequence is Toxin GTx1-15 (82 aa).

The signal sequence occupies residues 1-21 (MKTSVVFVIAGLALLSVACYA). The propeptide occupies 22–46 (SELKEQSSINEVLSTIFHFEQPEER). Intrachain disulfides connect Cys-48–Cys-63, Cys-55–Cys-69, and Cys-62–Cys-76. A Phenylalanine amide modification is found at Phe-80.

This sequence belongs to the neurotoxin 10 (Hwtx-1) family. 08 (Gtx1-15) subfamily. Expressed by the venom gland.

The protein localises to the secreted. In terms of biological role, potent voltage-gated sodium channel blocker. Potently inhibits the voltage-gated sodium channels Nav1.7/SCN9A (IC(50)=0.58-10 nM). Shows a moderate activity on Nav1.1/SCN1A (IC(50)=6 nM), Nav1.2/SCN2A (IC(50)=5-128 nM), Nav1.3/SCN3A (IC(50)=20.3-170 nM), and Nav1.6/SCN8A (IC(50)=17-20.1 nM). Shows an unclear inhibition of Nav1.4/SCN4A (IC(50)=200 nM to &gt;10 uM), Nav1.5/SCN5A (IC(50)=140 nM to &gt;10 uM) and Nav1.8/SCN10A (IC(50)=68-12200 nM). Weakly blocks the low voltage-gated calcium channels Cav3.1/CACNA1G (30% inhibition of the peak current by 9.8 nM of the toxin). It shows moderate affinity for lipid bilayers. The chain is Toxin GTx1-15 from Grammostola rosea (Chilean rose tarantula).